We begin with the raw amino-acid sequence, 215 residues long: 3-demethoxyubiquinol 3-hydroxylase (215 aa).

The Fe cation site is built by glutamate 64, glutamate 94, histidine 97, glutamate 146, glutamate 178, and histidine 181.

This sequence belongs to the COQ7 family. Requires Fe cation as cofactor.

It localises to the cell membrane. It catalyses the reaction a 5-methoxy-2-methyl-3-(all-trans-polyprenyl)benzene-1,4-diol + AH2 + O2 = a 3-demethylubiquinol + A + H2O. It participates in cofactor biosynthesis; ubiquinone biosynthesis. Functionally, catalyzes the hydroxylation of 2-nonaprenyl-3-methyl-6-methoxy-1,4-benzoquinol during ubiquinone biosynthesis. This chain is 3-demethoxyubiquinol 3-hydroxylase, found in Pseudomonas fluorescens (strain SBW25).